A 243-amino-acid polypeptide reads, in one-letter code: MTYSLRILDLPESDRPRERLIAQGAKYLTHAELLAILLGTGQGPGKLSAVGLGQHVLQHFSEHQQDPLTVLRDVNASELTTIQGIGPAKATTILAAIELGKRICQARPPELTVIDDPAVAAAALAGELMWQSQERFAVLLLDVKHRLLGTQVVSIGTATETLAHPRDIFREIIRKGATRAIVAHNHPSGQTDPSPEDLELTQQLLSGAQILGLPLLDHLILGNGDFTSLRQTTSLWNDCPQDL.

One can recognise an MPN domain in the interval 113–235 (VIDDPAVAAA…FTSLRQTTSL (123 aa)). H184, H186, and D197 together coordinate Zn(2+). The short motif at 184 to 197 (HNHPSGQTDPSPED) is the JAMM motif element.

This sequence belongs to the UPF0758 family.

The protein is UPF0758 protein AM1_4368 of Acaryochloris marina (strain MBIC 11017).